Here is a 312-residue protein sequence, read N- to C-terminus: Peptide methionine sulfoxide reductase MsrA/MsrB 1 (312 aa).

Residues 1-155 (MAEIYLAGGC…PSGYCHIDVT (155 aa)) are peptide methionine sulfoxide reductase. Cys10 is an active-site residue. Residues 172–295 (QEVLKASLSE…NSASLRFVAK (124 aa)) enclose the MsrB domain. Catalysis depends on Cys284, which acts as the Nucleophile.

It in the N-terminal section; belongs to the MsrA Met sulfoxide reductase family. This sequence in the C-terminal section; belongs to the MsrB Met sulfoxide reductase family.

It is found in the cell membrane. It carries out the reaction L-methionyl-[protein] + [thioredoxin]-disulfide + H2O = L-methionyl-(S)-S-oxide-[protein] + [thioredoxin]-dithiol. It catalyses the reaction [thioredoxin]-disulfide + L-methionine + H2O = L-methionine (S)-S-oxide + [thioredoxin]-dithiol. The enzyme catalyses L-methionyl-[protein] + [thioredoxin]-disulfide + H2O = L-methionyl-(R)-S-oxide-[protein] + [thioredoxin]-dithiol. In terms of biological role, has an important function as a repair enzyme for proteins that have been inactivated by oxidation. Catalyzes the reversible oxidation-reduction of methionine sulfoxide in proteins to methionine. This is Peptide methionine sulfoxide reductase MsrA/MsrB 1 (msrAB1) from Streptococcus pneumoniae serotype 4 (strain ATCC BAA-334 / TIGR4).